The sequence spans 432 residues: MRVVILGSGVVGVTSAWYLSQAGHDVTVIDRESGPAQETSAANAGQISPGYAAPWAAPGVPLKAIKWMFQRHAPLAVRLDGTPFQLKWMWQMLRNCDTRHYMENKGRMVRLAEYSRDCLKTLRAATGIEYEGRQGGTLQLFRTAQQYENATRDIAVLEDAGVPYQLLEASRLAEVEPALAEVAHKLTGGLRLPNDETGDCQLFTQRLARMAEQAGVTFRFNTPVEKLLYENDQIYGVKCADEIIKADAYVMAFGSYSTAMLKGIVDIPVYPLKGYSLTIPIVEPDGAPVSTILDETYKIAITRFDKRIRVGGMAEIVGFNTDLLQPRRETLEMVVRDLFPRGGHIEQATFWTGLRPMTPDGTPVVGRTRYKNLWLNTGHGTLGWTMACGSGQLLSDILSGRTPAIPYDDLSVARYRSDFTPTRPQRLHSAHN.

3 to 17 (VVILGSGVVGVTSAW) lines the FAD pocket.

Belongs to the DadA oxidoreductase family. It depends on FAD as a cofactor.

It carries out the reaction a D-alpha-amino acid + A + H2O = a 2-oxocarboxylate + AH2 + NH4(+). It functions in the pathway amino-acid degradation; D-alanine degradation; NH(3) and pyruvate from D-alanine: step 1/1. Oxidative deamination of D-amino acids. This is D-amino acid dehydrogenase from Salmonella agona (strain SL483).